Here is a 438-residue protein sequence, read N- to C-terminus: MGSHEVELRPWQSLAAGLGFSSPDEEYWWTAFAQPLNQLMEWADYSIAEQYRVLAFLHRYVIPTCGPKPYRNGEQYWKTFMGFDHTPIQVSINFYNSKATVRTANIPICALSGSALDPINQKATADTLKAQKHLAPGNDLRWFEHFAKAFFLPNDEAHLINAKVSDRVLAMQGVQGMLSYDFPPNRTQTKVAMSPIWKHIETGRPIGDLMIQSIKDLGDEATGYMQSLQVLEEFIESEAAKDAGVSPAFFAFDTNLSENYKSSRIKIYLATPRTAFNRMVDIFTLGGRLNGPEMDRATQALRLLWSSVINVPEGLLDNDDIVPKNPHRCACVIFNFEIWPGASVPTPKIYLPAAYYGKPDLEIAEGMDVFFKSQGWNQPFHSYTDNYAKAFLRDQKVTCRHHDISFSYKGEGAYVTAYYKPELDAFADAATWVPEIYK.

L-tryptophan is bound at residue 80-81 (FM). Substrate-binding residues include Arg102, Lys190, Arg264, Lys266, Tyr268, Tyr350, Tyr414, and Tyr418.

Belongs to the tryptophan dimethylallyltransferase family.

Its pathway is secondary metabolite biosynthesis. Its function is as follows. Indole diterpene prenyltransferase; part of the gene cluster that mediates the biosynthesis of the indole diterpenes janthitremanes such as shearinine K or shearinine A. The geranylgeranyl diphosphate (GGPP) synthase janG catalyzes the first step in janthitremane biosynthesis via conversion of farnesyl pyrophosphate and isopentyl pyrophosphate into geranylgeranyl pyrophosphate (GGPP). Condensation of indole-3-glycerol phosphate with GGPP by the prenyl transferase janC then forms 3-geranylgeranylindole (3-GGI). Epoxidation by the FAD-dependent monooxygenase janM leads to a epoxidized-GGI that is substrate of the terpene cyclase janB for cyclization to yield paspaline. Paspaline is subsequently converted to 13-desoxypaspaline by the cytochrome P450 monooxygenase janP, via beta-PC-M6 in a series of alpha-face oxidations. The cytochrome P450 monooxygenase janQ is proposed to carry out sequential beta-face oxidation steps at C-7 and C-13 of 13-desoxypaspaline to form paspalicine and paspalinine respectively. The indole diterpene prenyltransferase janD may then convert paspalinine into shearinine K which is substrate of janO and/or additional enzymes for oxidation and cyclization to generate shearinine A. This Penicillium janthinellum (Penicillium vitale) protein is Indole diterpene prenyltransferase janD.